The chain runs to 196 residues: Proteasome subunit beta 1 (196 aa).

The propeptide at 1 to 6 is removed in mature form; by autocatalysis; the sequence is MEELPA. The active-site Nucleophile is Thr7.

The protein belongs to the peptidase T1B family. In terms of assembly, the 20S proteasome core is composed of 14 alpha and 14 beta subunits that assemble into four stacked heptameric rings, resulting in a barrel-shaped structure. The two inner rings, each composed of seven catalytic beta subunits, are sandwiched by two outer rings, each composed of seven alpha subunits. The catalytic chamber with the active sites is on the inside of the barrel. Has a gated structure, the ends of the cylinder being occluded by the N-termini of the alpha-subunits. Is capped at one or both ends by the proteasome regulatory ATPase, PAN.

The protein resides in the cytoplasm. It carries out the reaction Cleavage of peptide bonds with very broad specificity.. The formation of the proteasomal ATPase PAN-20S proteasome complex, via the docking of the C-termini of PAN into the intersubunit pockets in the alpha-rings, triggers opening of the gate for substrate entry. Interconversion between the open-gate and close-gate conformations leads to a dynamic regulation of the 20S proteasome proteolysis activity. Its function is as follows. Component of the proteasome core, a large protease complex with broad specificity involved in protein degradation. The sequence is that of Proteasome subunit beta 1 from Saccharolobus islandicus (strain Y.N.15.51 / Yellowstone #2) (Sulfolobus islandicus).